Here is a 63-residue protein sequence, read N- to C-terminus: Megourin-1 (63 aa).

As to quaternary structure, monomer. Post-translationally, contains four disulfide bonds.

The protein localises to the secreted. In terms of biological role, has antimicrobial activity against Gram-positive bacteria and fungi. The protein is Megourin-1 of Megoura viciae (Vetch aphid).